The sequence spans 341 residues: MSFPYSLKPFNTFGVEQSCLSMIEVHSKAELQSTCLSLYQSKRPMLVLGGGSNIVFTDDFNGTVVRVLTKGISCSEDGTHFYLAVEAGENWHELVHFSLNQDMPGLENLALIPGTVGAAPIQNIGAYGVELCDICDWVEYLDLESGNLLRLTADECEFAYRESIFKGCLRDKAVITAVGLRLPKAWQPKLAYGPLQSFNAETVTPREIFERVCEVRSEKLPNPEELGNAGSFFKNPIVSAATYMQLAAHFPSIVGYAQPNGEVKLAAGWLIEHAGLKGFALGNAGVHAKQALVLVNLGHATGQDICRLALHVIARVNEVFGVKLEAEPRIMGLTGETSLDV.

The FAD-binding PCMH-type domain occupies 13–185 (FGVEQSCLSM…TAVGLRLPKA (173 aa)). Arg161 is an active-site residue. Ser231 (proton donor) is an active-site residue. Glu327 is a catalytic residue.

Belongs to the MurB family. Requires FAD as cofactor.

The protein resides in the cytoplasm. It catalyses the reaction UDP-N-acetyl-alpha-D-muramate + NADP(+) = UDP-N-acetyl-3-O-(1-carboxyvinyl)-alpha-D-glucosamine + NADPH + H(+). The protein operates within cell wall biogenesis; peptidoglycan biosynthesis. In terms of biological role, cell wall formation. The protein is UDP-N-acetylenolpyruvoylglucosamine reductase of Shewanella sp. (strain MR-4).